Consider the following 262-residue polypeptide: Acyl-[acyl-carrier-protein]--UDP-N-acetylglucosamine O-acyltransferase (262 aa).

Belongs to the transferase hexapeptide repeat family. LpxA subfamily. In terms of assembly, homotrimer.

It localises to the cytoplasm. The enzyme catalyses a (3R)-hydroxyacyl-[ACP] + UDP-N-acetyl-alpha-D-glucosamine = a UDP-3-O-[(3R)-3-hydroxyacyl]-N-acetyl-alpha-D-glucosamine + holo-[ACP]. Its pathway is glycolipid biosynthesis; lipid IV(A) biosynthesis; lipid IV(A) from (3R)-3-hydroxytetradecanoyl-[acyl-carrier-protein] and UDP-N-acetyl-alpha-D-glucosamine: step 1/6. Functionally, involved in the biosynthesis of lipid A, a phosphorylated glycolipid that anchors the lipopolysaccharide to the outer membrane of the cell. The sequence is that of Acyl-[acyl-carrier-protein]--UDP-N-acetylglucosamine O-acyltransferase from Burkholderia orbicola (strain MC0-3).